The chain runs to 883 residues: Leucine--tRNA ligase (883 aa).

Residues 43 to 53 carry the 'HIGH' region motif; the sequence is PYPSGRIHIGH. A 'KMSKS' region motif is present at residues 630–634; sequence KMSKS. ATP is bound at residue lysine 633.

It belongs to the class-I aminoacyl-tRNA synthetase family.

It is found in the cytoplasm. It carries out the reaction tRNA(Leu) + L-leucine + ATP = L-leucyl-tRNA(Leu) + AMP + diphosphate. This is Leucine--tRNA ligase from Nitrobacter winogradskyi (strain ATCC 25391 / DSM 10237 / CIP 104748 / NCIMB 11846 / Nb-255).